The primary structure comprises 260 residues: Hydroxyethylthiazole kinase 2 (260 aa).

Residue Met40 coordinates substrate. ATP-binding residues include Arg116 and Thr161. Ala188 is a substrate binding site.

It belongs to the Thz kinase family. Mg(2+) serves as cofactor.

It catalyses the reaction 5-(2-hydroxyethyl)-4-methylthiazole + ATP = 4-methyl-5-(2-phosphooxyethyl)-thiazole + ADP + H(+). It participates in cofactor biosynthesis; thiamine diphosphate biosynthesis; 4-methyl-5-(2-phosphoethyl)-thiazole from 5-(2-hydroxyethyl)-4-methylthiazole: step 1/1. Its function is as follows. Catalyzes the phosphorylation of the hydroxyl group of 4-methyl-5-beta-hydroxyethylthiazole (THZ). In Oceanobacillus iheyensis (strain DSM 14371 / CIP 107618 / JCM 11309 / KCTC 3954 / HTE831), this protein is Hydroxyethylthiazole kinase 2.